Reading from the N-terminus, the 473-residue chain is Adenosylhomocysteinase (473 aa).

Residues threonine 60, aspartate 135, and glutamate 197 each contribute to the substrate site. 198-200 lines the NAD(+) pocket; that stretch reads TTT. 2 residues coordinate substrate: lysine 227 and aspartate 231. NAD(+)-binding positions include asparagine 232, 261–266, glutamate 284, asparagine 319, 340–342, and asparagine 385; these read GFGDVG and IGH.

The protein belongs to the adenosylhomocysteinase family. The cofactor is NAD(+).

Its subcellular location is the cytoplasm. The catalysed reaction is S-adenosyl-L-homocysteine + H2O = L-homocysteine + adenosine. The protein operates within amino-acid biosynthesis; L-homocysteine biosynthesis; L-homocysteine from S-adenosyl-L-homocysteine: step 1/1. Functionally, may play a key role in the regulation of the intracellular concentration of adenosylhomocysteine. The polypeptide is Adenosylhomocysteinase (Bradyrhizobium sp. (strain BTAi1 / ATCC BAA-1182)).